A 489-amino-acid polypeptide reads, in one-letter code: Rhamnulokinase (489 aa).

13 to 17 (ASSGR) is an ATP binding site. Cysteines 68 and 222 form a disulfide. Substrate-binding positions include Gly-83 and 236-238 (HDT). Asp-237 acts as the Proton acceptor in catalysis. Thr-259 lines the ATP pocket. Asn-296 contributes to the substrate binding site. Gln-304 contributes to the ATP binding site. The cysteines at positions 353 and 370 are disulfide-linked. Gly-402 lines the ATP pocket. Cys-413 and Cys-417 form a disulfide bridge.

The protein belongs to the rhamnulokinase family. Requires Mg(2+) as cofactor.

The enzyme catalyses L-rhamnulose + ATP = L-rhamnulose 1-phosphate + ADP + H(+). Its pathway is carbohydrate degradation; L-rhamnose degradation; glycerone phosphate from L-rhamnose: step 2/3. Functionally, involved in the catabolism of L-rhamnose (6-deoxy-L-mannose). Catalyzes the transfer of the gamma-phosphate group from ATP to the 1-hydroxyl group of L-rhamnulose to yield L-rhamnulose 1-phosphate. This chain is Rhamnulokinase, found in Salmonella enteritidis PT4 (strain P125109).